A 119-amino-acid chain; its full sequence is uncharacterized protein (119 aa).

3 helical membrane passes run 28–48 (AWTT…HLVF), 55–75 (IEVV…NLAI), and 80–100 (PIGK…GIIV).

This sequence to M.tuberculosis Rv1342c.

It localises to the cell membrane. This is an uncharacterized protein from Mycobacterium leprae (strain TN).